The chain runs to 727 residues: Sodium-dependent neutral amino acid transporter SLC6A17 (727 aa).

The Cytoplasmic portion of the chain corresponds to 1 to 68 (MPKNSKVTQR…DRPAWNSKLQ (68 aa)). S13 and S20 each carry phosphoserine. A helical transmembrane segment spans residues 69-89 (YILAQIGFSVGLGNIWRFPYL). Residues 90 to 96 (CQKNGGG) lie on the Extracellular side of the membrane. The helical transmembrane segment at 97-116 (AYLVPYLVLLIIIGIPLFFL) threads the bilayer. Residues 117–140 (ELAVGQRIRRGSIGVWHYVCPRLG) lie on the Cytoplasmic side of the membrane. A helical membrane pass occupies residues 141–161 (GIGFSSCIVCLFVGLYYNVII). Topologically, residues 162–224 (GWSVFYFFKS…NSISESGGLN (63 aa)) are extracellular. N-linked (GlcNAc...) asparagine glycosylation occurs at N186. The chain crosses the membrane as a helical span at residues 225–243 (WKMTLCLLVAWSIVGMAVV). The Cytoplasmic segment spans residues 244–251 (KGIQSSGK). A helical transmembrane segment spans residues 252–269 (VMYFSSLFPYVVLACFLV). Residues 270 to 304 (RGLLLRGAVDGILHMFTPKLDKMLDPQVWREAATQ) are Extracellular-facing. Residues 305–322 (VFFALGLGFGGVIAFSSY) form a helical membrane-spanning segment. Residues 323 to 333 (NKQDNNCHFDA) lie on the Cytoplasmic side of the membrane. The helical transmembrane segment at 334-355 (ALVSFINFFTSVLATLVVFAVL) threads the bilayer. Over 356–451 (GFKANIMNEK…FIAFTEAMTH (96 aa)) the chain is Extracellular. Y377 is modified (phosphotyrosine). N-linked (GlcNAc...) asparagine glycosylation occurs at N393. The helical transmembrane segment at 452–471 (FPASPFWSVMFFLMLINLGL) threads the bilayer. The Cytoplasmic portion of the chain corresponds to 472 to 494 (GSMIGTMAGITTPIIDTFKVPKE). The helical transmembrane segment at 495–513 (MFTVGCCVFAFFVGLLFVQ) threads the bilayer. The Extracellular portion of the chain corresponds to 514-528 (RSGNYFVTMFDDYSA). Residues 529 to 549 (TLPLTVIVILENIAVAWIYGT) form a helical membrane-spanning segment. The Cytoplasmic segment spans residues 550–569 (KKFMQELTEMLGFQPYRFYF). Residues 570-591 (YMWKFVSPLCMAVLTTASIIQL) form a helical membrane-spanning segment. The Extracellular portion of the chain corresponds to 592–618 (GVSPPGYSAWIKEEAAERYLYFPNWAM). Residues 619–641 (ALLITLIAVATLPIPVVFILRHF) traverse the membrane as a helical segment. Topologically, residues 642-727 (HLLSDGSNTL…LLASTPESEL (86 aa)) are cytoplasmic. Phosphoserine occurs at positions 665 and 701. Residues 680-727 (VPSEAPSPMPTHRSYLGPGSTSPLDNSNNPNGRYGSGYLLASTPESEL) form a disordered region. The segment covering 698 to 710 (GSTSPLDNSNNPN) has biased composition (polar residues).

Belongs to the sodium:neurotransmitter symporter (SNF) (TC 2.A.22) family. In terms of tissue distribution, expressed in the brain. The strongest expression levels in embryonic, postnatal, and adult stages are found in both cortical and hippocampal tissues.

It is found in the cytoplasmic vesicle. The protein resides in the secretory vesicle. It localises to the synaptic vesicle membrane. Its subcellular location is the postsynapse. The protein localises to the presynapse. It carries out the reaction L-proline(in) + Na(+)(in) = L-proline(out) + Na(+)(out). The enzyme catalyses L-leucine(in) + Na(+)(in) = L-leucine(out) + Na(+)(out). The catalysed reaction is glycine(in) + Na(+)(in) = glycine(out) + Na(+)(out). It catalyses the reaction L-alanine(in) + Na(+)(in) = L-alanine(out) + Na(+)(out). It carries out the reaction L-glutamine(in) + Na(+)(in) = L-glutamine(out) + Na(+)(out). Synaptic vesicle transporter with apparent selectivity for neutral amino acids. The transport is sodium-coupled but chloride-independent, likely driven by the proton electrochemical gradient generated by vacuolar H(+)-ATPase in an overall electrogenic mechanism. May contribute to the synaptic uptake of neurotransmitter precursors in a process coupled in part to vesicle exocytosis. The polypeptide is Sodium-dependent neutral amino acid transporter SLC6A17 (Mus musculus (Mouse)).